The sequence spans 510 residues: Sphingolipid C9-methyltransferase B (510 aa).

Residue Asn55 is glycosylated (N-linked (GlcNAc...) asparagine). A run of 2 helical transmembrane segments spans residues 62–82 (LLGG…GGGA) and 84–104 (TFVF…WTYA). An N-linked (GlcNAc...) asparagine glycan is attached at Asn175. S-adenosyl-L-methionine contacts are provided by residues 227–228 (YT), 264–272 (MLDIGCGWG), 290–295 (TIAENQ), and 320–321 (YR). Residue Asn294 is glycosylated (N-linked (GlcNAc...) asparagine).

This sequence belongs to the CFA/CMAS family.

Its subcellular location is the membrane. The catalysed reaction is a (4E,8E)-4-sphinga-4,8-dienine ceramide + S-adenosyl-L-methionine = a 9-methyl-(4E,8E)-sphinga-4,8-dienine ceramide + S-adenosyl-L-homocysteine + H(+). It participates in lipid metabolism; sphingolipid metabolism. Catalyzes methylation of the sphingoid base component of glucosylceramides (GluCers) at the C9-position. Sphingolipid C9-methylation requires 4,8-desaturated ceramides as substrates. Glucosylceramides play important roles in growth, differentiation and pathogenicity. The methyl group at the C9-position distinguishes fungal glucosylceramides from those of plants and animals and may thus play a role in host-pathogen interactions enabling the host to recognize the fungal attack and initiate specific defense responses. The protein is Sphingolipid C9-methyltransferase B of Emericella nidulans (strain FGSC A4 / ATCC 38163 / CBS 112.46 / NRRL 194 / M139) (Aspergillus nidulans).